The chain runs to 155 residues: uncharacterized protein (155 aa).

2 disordered regions span residues 24 to 63 (RVGY…VVLK) and 80 to 155 (KAAK…DENE). The residue at position 50 (Ser50) is a Phosphoserine. N6-acetyllysine is present on Lys108. A compositionally biased stretch (polar residues) spans 128 to 147 (KQSSVRKNSQKQIKNSSLLS). Phosphoserine is present on residues Ser130, Ser147, and Ser150.

This is an uncharacterized protein from Mus musculus (Mouse).